We begin with the raw amino-acid sequence, 284 residues long: 4-diphosphocytidyl-2-C-methyl-D-erythritol kinase (284 aa).

Lys-14 is an active-site residue. An ATP-binding site is contributed by 98-108 (PMGGGLGGGSS). The active site involves Asp-140.

Belongs to the GHMP kinase family. IspE subfamily.

It carries out the reaction 4-CDP-2-C-methyl-D-erythritol + ATP = 4-CDP-2-C-methyl-D-erythritol 2-phosphate + ADP + H(+). Its pathway is isoprenoid biosynthesis; isopentenyl diphosphate biosynthesis via DXP pathway; isopentenyl diphosphate from 1-deoxy-D-xylulose 5-phosphate: step 3/6. In terms of biological role, catalyzes the phosphorylation of the position 2 hydroxy group of 4-diphosphocytidyl-2C-methyl-D-erythritol. This is 4-diphosphocytidyl-2-C-methyl-D-erythritol kinase from Shewanella oneidensis (strain ATCC 700550 / JCM 31522 / CIP 106686 / LMG 19005 / NCIMB 14063 / MR-1).